The primary structure comprises 315 residues: Voltage-dependent calcium channel gamma-3 subunit (315 aa).

A run of 4 helical transmembrane segments spans residues 8 to 28, 104 to 124, 135 to 155, and 181 to 201; these read IQML…TIAV, SSVF…CVAA, ILSA…GIIV, and FGAF…HIYI. A Phosphoserine modification is found at S248.

It belongs to the PMP-22/EMP/MP20 family. CACNG subfamily. The L-type calcium channel is composed of five subunits: alpha-1, alpha-2/delta, beta and gamma. Acts as an auxiliary subunit for AMPA-selective glutamate receptors (AMPARs). Found in a complex with GRIA1, GRIA2, GRIA3, GRIA4, CNIH2, CNIH3, CACNG2, CACNG4, CACNG5, CACNG7 and CACNG8. Interacts with AP4M1 and GRIA1; associates GRIA1 with the adaptor protein complex 4 (AP-4) to target GRIA1 to the somatodendritic compartment of neurons.

It localises to the membrane. Functionally, regulates the trafficking to the somatodendritic compartment and gating properties of AMPA-selective glutamate receptors (AMPARs). Promotes their targeting to the cell membrane and synapses and modulates their gating properties by slowing their rates of activation, deactivation and desensitization. Does not show subunit-specific AMPA receptor regulation and regulates all AMPAR subunits. Thought to stabilize the calcium channel in an inactivated (closed) state. In Homo sapiens (Human), this protein is Voltage-dependent calcium channel gamma-3 subunit (CACNG3).